We begin with the raw amino-acid sequence, 309 residues long: Ribosomal RNA small subunit methyltransferase H (309 aa).

S-adenosyl-L-methionine-binding positions include 41–43, aspartate 61, phenylalanine 85, aspartate 102, and glutamine 109; that span reads GGH.

Belongs to the methyltransferase superfamily. RsmH family.

Its subcellular location is the cytoplasm. It catalyses the reaction cytidine(1402) in 16S rRNA + S-adenosyl-L-methionine = N(4)-methylcytidine(1402) in 16S rRNA + S-adenosyl-L-homocysteine + H(+). In terms of biological role, specifically methylates the N4 position of cytidine in position 1402 (C1402) of 16S rRNA. The protein is Ribosomal RNA small subunit methyltransferase H of Albidiferax ferrireducens (strain ATCC BAA-621 / DSM 15236 / T118) (Rhodoferax ferrireducens).